Reading from the N-terminus, the 503-residue chain is GTPase Obg (503 aa).

The Obg domain maps to 2 to 159; it reads PQFVDRVVLH…KDVILELKSM (158 aa). The OBG-type G domain maps to 160-340; it reads ADVGLVGFPS…LKYALMDIVK (181 aa). GTP contacts are provided by residues 166-173, 191-195, 212-215, 292-295, and 321-323; these read GFPSAGKS, FTTLV, DVPG, NKMD, and STV. Residues serine 173 and threonine 193 each contribute to the Mg(2+) site. An OCT domain is found at 371-444; it reads EFEVEADPSA…IGEITFEWDP (74 aa). Basic and acidic residues predominate over residues 457–476; it reads RGTDVRLEQNTRATPEERKR. Positions 457–503 are disordered; sequence RGTDVRLEQNTRATPEERKRASQARRGLIDENDFGDGEVAERERWQG.

This sequence belongs to the TRAFAC class OBG-HflX-like GTPase superfamily. OBG GTPase family. Monomer. It depends on Mg(2+) as a cofactor.

The protein resides in the cytoplasm. Its function is as follows. An essential GTPase which binds GTP, GDP and possibly (p)ppGpp with moderate affinity, with high nucleotide exchange rates and a fairly low GTP hydrolysis rate. Plays a role in control of the cell cycle, stress response, ribosome biogenesis and in those bacteria that undergo differentiation, in morphogenesis control. The sequence is that of GTPase Obg from Corynebacterium jeikeium (strain K411).